We begin with the raw amino-acid sequence, 51 residues long: MREKIRLNSSAGTGHFYTTDKNKRTMPEKMEIKKYDPVVRKHVVYKEGKIK.

The disordered stretch occupies residues methionine 1–arginine 24.

This sequence belongs to the bacterial ribosomal protein bL33 family.

The protein is Large ribosomal subunit protein bL33 of Cellvibrio japonicus (strain Ueda107) (Pseudomonas fluorescens subsp. cellulosa).